Consider the following 651-residue polypeptide: Intraflagellar transport protein 70A (651 aa).

TPR repeat units lie at residues 8 to 41 (DGEYTATIYKLIKEARYGEAIQILSNELQKQYRS), 42 to 75 (RAGLSLLGYCYYQIQDFVNAADCYEQLIQITPEV), 140 to 173 (PESEINMGCLLYKEGHYEEACKKFITAMQVMGYK), 175 to 207 (DLSYNIALCYYSMKQYAPALKHIADIIERGIRE), 372 to 405 (LTEQMRKLTKQVQEARHNRDDEAVKKAVNEYDET), 410 to 443 (IPVLMAQAKIYWNMENYQMVEKIFRKSVEFCNEH), and 445 to 478 (IWKLNVAHVLFMQDNKYKEAIGFYEPIVKKHYDN). Residues 494 to 521 (YIMTSQNEEAEELMRKIEKEEEQIAYEN) adopt a coiled-coil conformation. The stretch at 530–563 (CIVNLVIGTLYCAKGNYEFGISRVIKSLEPYNKK) is one TPR 8 repeat.

It belongs to the TTC30/dfy-1/fleer family.

The protein resides in the cell projection. It is found in the cilium. Functionally, required for polyglutamylation of axonemal tubulin. Plays a role in anterograde intraflagellar transport (IFT), the process by which cilia precursors are transported from the base of the cilium to the site of their incorporation at the tip. In Xenopus tropicalis (Western clawed frog), this protein is Intraflagellar transport protein 70A (ift70a).